The following is a 235-amino-acid chain: Phosphoribosylaminoimidazole-succinocarboxamide synthase (235 aa).

The protein belongs to the SAICAR synthetase family.

The catalysed reaction is 5-amino-1-(5-phospho-D-ribosyl)imidazole-4-carboxylate + L-aspartate + ATP = (2S)-2-[5-amino-1-(5-phospho-beta-D-ribosyl)imidazole-4-carboxamido]succinate + ADP + phosphate + 2 H(+). Its pathway is purine metabolism; IMP biosynthesis via de novo pathway; 5-amino-1-(5-phospho-D-ribosyl)imidazole-4-carboxamide from 5-amino-1-(5-phospho-D-ribosyl)imidazole-4-carboxylate: step 1/2. This chain is Phosphoribosylaminoimidazole-succinocarboxamide synthase, found in Prosthecochloris aestuarii (strain DSM 271 / SK 413).